We begin with the raw amino-acid sequence, 416 residues long: Tyrosine--tRNA ligase (416 aa).

Position 39 (tyrosine 39) interacts with L-tyrosine. The 'HIGH' region motif lies at 44-53; it reads CTAPSLHAGH. L-tyrosine-binding residues include tyrosine 176 and glutamine 180. The short motif at 236 to 240 is the 'KMSKS' region element; that stretch reads KMGKT. ATP is bound at residue lysine 239. Positions 349–414 constitute an S4 RNA-binding domain; sequence ISLVDLLHDT…AGKKRHIKVV (66 aa).

This sequence belongs to the class-I aminoacyl-tRNA synthetase family. TyrS type 1 subfamily. Homodimer.

It is found in the cytoplasm. The catalysed reaction is tRNA(Tyr) + L-tyrosine + ATP = L-tyrosyl-tRNA(Tyr) + AMP + diphosphate + H(+). In terms of biological role, catalyzes the attachment of tyrosine to tRNA(Tyr) in a two-step reaction: tyrosine is first activated by ATP to form Tyr-AMP and then transferred to the acceptor end of tRNA(Tyr). In Wolbachia pipientis wMel, this protein is Tyrosine--tRNA ligase.